A 246-amino-acid chain; its full sequence is UPF0736 protein Aflv_2136 (246 aa).

This sequence belongs to the UPF0736 family.

This Anoxybacillus flavithermus (strain DSM 21510 / WK1) protein is UPF0736 protein Aflv_2136.